The sequence spans 317 residues: MDYRVLLYYKYVTIDDPETFAAEHLEFCKENNLKGRILVSTEGINGTLSGTKEDTDQYIAHMRADERFKDITFKIDEAEGHAFKKMHVRPRHEIVALDLENDIDPRETTGKYLSPSEFREALEDDDTIVIDARNDYEFDLGHFRGAVRPNITRFRDLPDWIKENKEVFMDKKIVTYCTGGIRCEKFSGFLLKEGFEDVAQLEGGIATYGKDPETKGELWDGKMYVFDERISVDVNQVEKTVIGKEWFDGTPCERYINCSNPECNKQILVSEENEHRYLGACCKECAEHERNRYVAKHNISDEEKEKCLENFKETVQQ.

The Rhodanese domain maps to 123–217 (EDDDTIVIDA…YGKDPETKGE (95 aa)). Cysteine 177 acts as the Cysteine persulfide intermediate in catalysis.

The protein belongs to the TrhO family.

It catalyses the reaction uridine(34) in tRNA + AH2 + O2 = 5-hydroxyuridine(34) in tRNA + A + H2O. Functionally, catalyzes oxygen-dependent 5-hydroxyuridine (ho5U) modification at position 34 in tRNAs. In Staphylococcus carnosus (strain TM300), this protein is tRNA uridine(34) hydroxylase.